The following is a 92-amino-acid chain: Small ribosomal subunit protein uS19 (92 aa).

The protein belongs to the universal ribosomal protein uS19 family.

In terms of biological role, protein S19 forms a complex with S13 that binds strongly to the 16S ribosomal RNA. The sequence is that of Small ribosomal subunit protein uS19 from Paracidovorax citrulli (strain AAC00-1) (Acidovorax citrulli).